A 148-amino-acid chain; its full sequence is Large ribosomal subunit protein bL9 (148 aa).

This sequence belongs to the bacterial ribosomal protein bL9 family.

Binds to the 23S rRNA. The protein is Large ribosomal subunit protein bL9 of Bacillus cereus (strain G9842).